A 321-amino-acid polypeptide reads, in one-letter code: Lipoyl synthase (321 aa).

The [4Fe-4S] cluster site is built by cysteine 68, cysteine 73, cysteine 79, cysteine 94, cysteine 98, cysteine 101, and serine 308. A Radical SAM core domain is found at 80–297; the sequence is FNHGTATFMI…KALADELGFT (218 aa).

It belongs to the radical SAM superfamily. Lipoyl synthase family. Requires [4Fe-4S] cluster as cofactor.

The protein resides in the cytoplasm. It catalyses the reaction [[Fe-S] cluster scaffold protein carrying a second [4Fe-4S](2+) cluster] + N(6)-octanoyl-L-lysyl-[protein] + 2 oxidized [2Fe-2S]-[ferredoxin] + 2 S-adenosyl-L-methionine + 4 H(+) = [[Fe-S] cluster scaffold protein] + N(6)-[(R)-dihydrolipoyl]-L-lysyl-[protein] + 4 Fe(3+) + 2 hydrogen sulfide + 2 5'-deoxyadenosine + 2 L-methionine + 2 reduced [2Fe-2S]-[ferredoxin]. The protein operates within protein modification; protein lipoylation via endogenous pathway; protein N(6)-(lipoyl)lysine from octanoyl-[acyl-carrier-protein]: step 2/2. Functionally, catalyzes the radical-mediated insertion of two sulfur atoms into the C-6 and C-8 positions of the octanoyl moiety bound to the lipoyl domains of lipoate-dependent enzymes, thereby converting the octanoylated domains into lipoylated derivatives. This Shewanella baltica (strain OS223) protein is Lipoyl synthase.